The chain runs to 309 residues: Ribosomal RNA small subunit methyltransferase H (309 aa).

Residues 39–41 (GGH), Asp-59, Phe-83, Asp-100, and Gln-107 each bind S-adenosyl-L-methionine.

It belongs to the methyltransferase superfamily. RsmH family.

Its subcellular location is the cytoplasm. It catalyses the reaction cytidine(1402) in 16S rRNA + S-adenosyl-L-methionine = N(4)-methylcytidine(1402) in 16S rRNA + S-adenosyl-L-homocysteine + H(+). Its function is as follows. Specifically methylates the N4 position of cytidine in position 1402 (C1402) of 16S rRNA. The sequence is that of Ribosomal RNA small subunit methyltransferase H from Delftia acidovorans (strain DSM 14801 / SPH-1).